Consider the following 309-residue polypeptide: MASTFKITFLGTGGSVPKPGRGLPAIAVQVDNIVNLFDCGEGTQKQFMKSGVSFMNVKNIFISHFHGDHFFGLPGLLSTFSFNGRIDDLNIFGPPGTIDEIKKVLSLIDFKITYNIKIAEMEENKKYDFDLFDVYAIKNDHTKYGYSYKLKEKDLIKINREKADSIGFPKNKLELLRNNGEYYYMGKRYSIWDVADGIKPGRSIVYSGDTRPFNDMLKFASNCDVLIHDSTMDASIENLANEYGHSTARQAAEIALKANVKRLFLFHYSSRYNDLNLLLNEAKSIFNDSYLSREMLEFNVDKKTELIKI.

The Zn(2+) site is built by H64, H66, D68, H69, H141, D209, and H267. D68 serves as the catalytic Proton acceptor.

The protein belongs to the RNase Z family. As to quaternary structure, homodimer. Zn(2+) serves as cofactor.

It catalyses the reaction Endonucleolytic cleavage of RNA, removing extra 3' nucleotides from tRNA precursor, generating 3' termini of tRNAs. A 3'-hydroxy group is left at the tRNA terminus and a 5'-phosphoryl group is left at the trailer molecule.. Zinc phosphodiesterase, which displays some tRNA 3'-processing endonuclease activity. Probably involved in tRNA maturation, by removing a 3'-trailer from precursor tRNA. The polypeptide is Ribonuclease Z (Picrophilus torridus (strain ATCC 700027 / DSM 9790 / JCM 10055 / NBRC 100828 / KAW 2/3)).